The sequence spans 355 residues: C-C chemokine receptor type 1 (355 aa).

The Extracellular portion of the chain corresponds to 1–34 (METPDTTENYDMITEFDYGDATPCHKVNERAILA). Residues 35 to 60 (QLLPPLYSLVFVIGVVGNLLVVLVLV) traverse the membrane as a helical segment. Residues 61 to 64 (QYKR) lie on the Cytoplasmic side of the membrane. A helical membrane pass occupies residues 65–91 (LKNMTNIYLLNLAISDLLFLFTLPFLI). The Extracellular segment spans residues 92–107 (YYKSTDDWIFGDAMCK). The cysteines at positions 106 and 183 are disulfide-linked. A helical membrane pass occupies residues 108 to 129 (ILSGFYYTGLYSEIFFIILLTI). The Cytoplasmic portion of the chain corresponds to 130 to 146 (DRYLAIVHAVFALRART). Residues 147 to 171 (VTFGVITSIIIWALAILASSPLMYF) traverse the membrane as a helical segment. Over 172–197 (SKTQWNIVRHSCNLHFPYESFQQWKL) the chain is Extracellular. Residues 198-223 (FQALKLNLFGLVLPLLVMIVCYTGII) form a helical membrane-spanning segment. At 224–239 (KILLRRPNEKKSKAVR) the chain is on the cytoplasmic side. A helical membrane pass occupies residues 240-264 (LIFVIMIIFFLFWTPYNLTELISVF). Over 265-281 (QEFLFTHLCEQNRQLDL) the chain is Extracellular. Residues 282–305 (AMEVTEVIANMHCCVNPVIYAFAG) traverse the membrane as a helical segment. At 306-355 (ERFRKYLRQLFHRRVAVHLVKWLPFLSGDRLERVSSTSPSTGEHELSAGL) the chain is on the cytoplasmic side.

It belongs to the G-protein coupled receptor 1 family. As to quaternary structure, interacts with CREB3. Interacts with CCL3. Interacts with CCL15. Interacts with CCL23. Interacts with GNAI1. Interacts with PF4/CXCL4.

The protein resides in the cell membrane. Functionally, chemokine receptor that plays a crucial role in regulating immune cell migration, inflammation, and immune responses. Contributes to the inflammatory response by recruiting immune cells, such as monocytes, macrophages, T-cells, and dendritic cells, to sites of inflammation for the clearance of pathogens and the resolution of tissue damage. When activated by its ligands including CCL3, CCL5-9, CCL13-16 and CCL23, triggers a signaling cascade within immune cells, leading to their migration towards the source of the chemokine. For example, mediates neutrophil migration after activation by CCL3 leading to the sequential release of TNF-alpha and leukotriene B4. Also mediates monocyte migration upon CXCL4 binding. Activation by CCL5 results in neuroinflammation through the ERK1/2 signaling pathway. In Macaca fascicularis (Crab-eating macaque), this protein is C-C chemokine receptor type 1 (CCR1).